The primary structure comprises 667 residues: Mediator of RNA polymerase II transcription subunit 17 (667 aa).

Residues 172–197 (KRRALQEAVQVLDMAQKQRQRASSNL) adopt a coiled-coil conformation.

The protein belongs to the Mediator complex subunit 17 family. Component of the Mediator complex.

It localises to the nucleus. Component of the Mediator complex, a coactivator involved in regulated gene transcription of nearly all RNA polymerase II-dependent genes. Mediator functions as a bridge to convey information from gene-specific regulatory proteins to the basal RNA polymerase II transcription machinery. Mediator is recruited to promoters by direct interactions with regulatory proteins and serves as a scaffold for the assembly of a functional preinitiation complex with RNA polymerase II and the general transcription factors. This Caenorhabditis elegans protein is Mediator of RNA polymerase II transcription subunit 17 (mdt-17).